Reading from the N-terminus, the 307-residue chain is Sporulation sigma-E factor-processing peptidase (307 aa).

The next 5 helical transmembrane spans lie at 7 to 27 (LIWM…AVVL), 36 to 56 (LLLG…PFSH), 57 to 77 (LMVH…MTFG), 89 to 109 (LTFY…HFLF), and 127 to 147 (FGDP…SYFS). Aspartate 183 is a catalytic residue.

Belongs to the peptidase U4 family. Self-associates. Interacts with SigE. Interacts with SpoIIR.

The protein resides in the cell membrane. Probable aspartic protease that is responsible for the proteolytic cleavage of the RNA polymerase sigma E factor (SigE/spoIIGB) to yield the active peptide in the mother cell during sporulation. Responds to a signal from the forespore that is triggered by the extracellular signal protein SpoIIR. This is Sporulation sigma-E factor-processing peptidase from Priestia megaterium (strain ATCC 12872 / QMB1551) (Bacillus megaterium).